Reading from the N-terminus, the 189-residue chain is MQLLKKRILQDGKCYEGGILKVDSFINHQMDPVLMKSIGVEFVRLFAGTNVNKIMTIEASGIAPAIMTGYLMDLPVVFAKKKSPRTIQNALSTTVHSFTKDRDYEVVISSDFLTPKDNVLFVDDFLAYGNAALGVIDLIKQSGANLVGMGFIIEKAFQNGRKTLEERGVRVESLAIIEDLSNCRITIKD.

Xanthine contacts are provided by Leu20 and Asn27. 127–131 lines the 5-phospho-alpha-D-ribose 1-diphosphate pocket; that stretch reads AYGNA. Lys155 provides a ligand contact to xanthine.

The protein belongs to the purine/pyrimidine phosphoribosyltransferase family. Xpt subfamily. In terms of assembly, homodimer.

It localises to the cytoplasm. It carries out the reaction XMP + diphosphate = xanthine + 5-phospho-alpha-D-ribose 1-diphosphate. It functions in the pathway purine metabolism; XMP biosynthesis via salvage pathway; XMP from xanthine: step 1/1. Functionally, converts the preformed base xanthine, a product of nucleic acid breakdown, to xanthosine 5'-monophosphate (XMP), so it can be reused for RNA or DNA synthesis. The sequence is that of Xanthine phosphoribosyltransferase from Bacteroides fragilis (strain ATCC 25285 / DSM 2151 / CCUG 4856 / JCM 11019 / LMG 10263 / NCTC 9343 / Onslow / VPI 2553 / EN-2).